Reading from the N-terminus, the 82-residue chain is MFSRVALRAAPRQQPFSLVARRTFQTTRAQLSSPYHYPEGPRSNLPFNPKTRFFWFRYLMYCVVGFGSPVAIAVWQTYRPRS.

The N-terminal 31 residues, 1-31 (MFSRVALRAAPRQQPFSLVARRTFQTTRAQL), are a transit peptide targeting the mitochondrion. Residues 32–52 (SSPYHYPEGPRSNLPFNPKTR) lie on the Mitochondrial matrix side of the membrane. A helical membrane pass occupies residues 53–75 (FFWFRYLMYCVVGFGSPVAIAVW). Residues 76–82 (QTYRPRS) are Mitochondrial intermembrane-facing.

This sequence belongs to the cytochrome c oxidase VIIc family. As to quaternary structure, component of the cytochrome c oxidase (complex IV, CIV), a multisubunit enzyme composed of 11 subunits. The complex is composed of a catalytic core of 3 subunits Cox1, Cox2 and Cox3, encoded in the mitochondrial DNA, and 8 supernumerary subunits Cox4, Cox5a/Cox5, Cox6, Cox7, Cox8, Cox7a/Cox9, Cox6b/Cox12 and Cox6a/Cox13, which are encoded in the nuclear genome. The complex exists as a monomer or a dimer and forms respiratory supercomplexes (SCs) in the inner mitochondrial membrane with NADH-ubiquinone oxidoreductase (complex I, CI) and ubiquinol-cytochrome c oxidoreductase (cytochrome b-c1 complex, complex III, CIII), resulting in various different assemblies (supercomplexes I(1)IV(1), I(1)III(3)IV(2), III(2)IV(1) and III(2)IV(2) as well as larger supercomplexes of compositions like I(1)III(2)IV(5-6)).

It localises to the mitochondrion inner membrane. The protein operates within energy metabolism; oxidative phosphorylation. Component of the cytochrome c oxidase, the last enzyme in the mitochondrial electron transport chain which drives oxidative phosphorylation. The respiratory chain contains 3 multisubunit complexes succinate dehydrogenase (complex II, CII), ubiquinol-cytochrome c oxidoreductase (cytochrome b-c1 complex, complex III, CIII) and cytochrome c oxidase (complex IV, CIV), that cooperate to transfer electrons derived from NADH and succinate to molecular oxygen, creating an electrochemical gradient over the inner membrane that drives transmembrane transport and the ATP synthase. Cytochrome c oxidase is the component of the respiratory chain that catalyzes the reduction of oxygen to water. Electrons originating from reduced cytochrome c in the intermembrane space (IMS) are transferred via the dinuclear copper A center (CU(A)) of Cox2 and heme A of Cox1 to the active site in Cox1, a binuclear center (BNC) formed by heme A3 and copper B (CU(B)). The BNC reduces molecular oxygen to 2 water molecules using 4 electrons from cytochrome c in the IMS and 4 protons from the mitochondrial matrix. The chain is Cytochrome c oxidase subunit 8, mitochondrial (cox-15) from Neurospora crassa (strain ATCC 24698 / 74-OR23-1A / CBS 708.71 / DSM 1257 / FGSC 987).